A 299-amino-acid chain; its full sequence is CCR4-NOT transcription complex subunit 9 (299 aa).

N-acetylmethionine is present on M1.

This sequence belongs to the CNOT9 family. As to quaternary structure, homodimer. Component of the CCR4-NOT complex; distinct complexes seem to exist that differ in the participation of probably mutually exclusive catalytic subunits. Interacts with MYB, ATF2, RARA, RARB, RARG, RXRA, RXRB and RXRG. Identified in a complex with ATF2 bound to target DNA. Interacts with NANOS2. Directly interacts with ZNF335. In terms of tissue distribution, detected in spleen, thymus, prostate, testis, ovary and intestine.

The protein localises to the nucleus. The protein resides in the cytoplasm. Its subcellular location is the P-body. Its function is as follows. Component of the CCR4-NOT complex which is one of the major cellular mRNA deadenylases and is linked to various cellular processes including bulk mRNA degradation, miRNA-mediated repression, translational repression during translational initiation and general transcription regulation. Additional complex functions may be a consequence of its influence on mRNA expression. Involved in down-regulation of MYB- and JUN-dependent transcription. May play a role in cell differentiation. Can bind oligonucleotides, such as poly-G, poly-C or poly-T (in vitro), but the physiological relevance of this is not certain. Does not bind poly-A. Enhances ligand-dependent transcriptional activity of nuclear hormone receptors, including RARA, expect ESR1-mediated transcription that is not only slightly increased, if at all. The protein is CCR4-NOT transcription complex subunit 9 of Homo sapiens (Human).